Reading from the N-terminus, the 580-residue chain is Dihydroxy-acid dehydratase (580 aa).

Positions 1–31 (MPSGSSESPADALRASDSTPDIKPRSRDVTD) are disordered. Residues 20–31 (PDIKPRSRDVTD) are compositionally biased toward basic and acidic residues. Cysteine 69 contacts [2Fe-2S] cluster. Position 101 (aspartate 101) interacts with Mg(2+). A [2Fe-2S] cluster-binding site is contributed by cysteine 142. Aspartate 143 and lysine 144 together coordinate Mg(2+). Lysine 144 is subject to N6-carboxylysine. Cysteine 219 contacts [2Fe-2S] cluster. A Mg(2+)-binding site is contributed by glutamate 470. Serine 496 functions as the Proton acceptor in the catalytic mechanism.

Belongs to the IlvD/Edd family. As to quaternary structure, homodimer. [2Fe-2S] cluster serves as cofactor. Mg(2+) is required as a cofactor.

It catalyses the reaction (2R)-2,3-dihydroxy-3-methylbutanoate = 3-methyl-2-oxobutanoate + H2O. The catalysed reaction is (2R,3R)-2,3-dihydroxy-3-methylpentanoate = (S)-3-methyl-2-oxopentanoate + H2O. It functions in the pathway amino-acid biosynthesis; L-isoleucine biosynthesis; L-isoleucine from 2-oxobutanoate: step 3/4. The protein operates within amino-acid biosynthesis; L-valine biosynthesis; L-valine from pyruvate: step 3/4. Functionally, functions in the biosynthesis of branched-chain amino acids. Catalyzes the dehydration of (2R,3R)-2,3-dihydroxy-3-methylpentanoate (2,3-dihydroxy-3-methylvalerate) into 2-oxo-3-methylpentanoate (2-oxo-3-methylvalerate) and of (2R)-2,3-dihydroxy-3-methylbutanoate (2,3-dihydroxyisovalerate) into 2-oxo-3-methylbutanoate (2-oxoisovalerate), the penultimate precursor to L-isoleucine and L-valine, respectively. The chain is Dihydroxy-acid dehydratase from Mycobacterium sp. (strain JLS).